The primary structure comprises 432 residues: Anaerobic glycerol-3-phosphate dehydrogenase subunit B (432 aa).

It belongs to the anaerobic G-3-P dehydrogenase subunit B family. In terms of assembly, composed of a catalytic GlpA/B dimer and of membrane bound GlpC. FMN serves as cofactor.

It carries out the reaction a quinone + sn-glycerol 3-phosphate = dihydroxyacetone phosphate + a quinol. It participates in polyol metabolism; glycerol degradation via glycerol kinase pathway; glycerone phosphate from sn-glycerol 3-phosphate (anaerobic route): step 1/1. Its function is as follows. Conversion of glycerol 3-phosphate to dihydroxyacetone. Uses fumarate or nitrate as electron acceptor. This Histophilus somni (strain 129Pt) (Haemophilus somnus) protein is Anaerobic glycerol-3-phosphate dehydrogenase subunit B.